An 840-amino-acid polypeptide reads, in one-letter code: Cancer-associated gene 1 protein homolog (840 aa).

A coiled-coil region spans residues 303 to 559 (MALNEILKKL…HVARSEEQNY (257 aa)). Residues 800 to 840 (EDLIRKPREKARKPRSKSLENHPKSMTMMPAVFKENRNDLD) are disordered. A compositionally biased stretch (basic residues) spans 806–815 (PREKARKPRS).

The protein is Cancer-associated gene 1 protein homolog (CAGE1) of Macaca fascicularis (Crab-eating macaque).